The sequence spans 102 residues: Small ribosomal subunit protein uS10 (102 aa).

The protein belongs to the universal ribosomal protein uS10 family. In terms of assembly, part of the 30S ribosomal subunit.

In terms of biological role, involved in the binding of tRNA to the ribosomes. This Methanocorpusculum labreanum (strain ATCC 43576 / DSM 4855 / Z) protein is Small ribosomal subunit protein uS10.